The chain runs to 367 residues: Phosphoribosylaminoimidazole-succinocarboxamide synthase (367 aa).

The protein belongs to the SAICAR synthetase family.

The enzyme catalyses 5-amino-1-(5-phospho-D-ribosyl)imidazole-4-carboxylate + L-aspartate + ATP = (2S)-2-[5-amino-1-(5-phospho-beta-D-ribosyl)imidazole-4-carboxamido]succinate + ADP + phosphate + 2 H(+). It participates in purine metabolism; IMP biosynthesis via de novo pathway; 5-amino-1-(5-phospho-D-ribosyl)imidazole-4-carboxamide from 5-amino-1-(5-phospho-D-ribosyl)imidazole-4-carboxylate: step 1/2. This is Phosphoribosylaminoimidazole-succinocarboxamide synthase from Shewanella sp. (strain W3-18-1).